The primary structure comprises 331 residues: Spondin-2 (331 aa).

Residues 1 to 26 (MENPSPAAALGKALCALLLATLGAAG) form the signal peptide. The 191-residue stretch at 31–221 (GESICSARAL…EITSSSPSHP (191 aa)) folds into the Spondin domain. A disulfide bridge connects residues Cys-35 and Cys-171. Glu-141 lines the a divalent metal cation pocket. Ca(2+)-binding residues include Asp-160, Asp-188, and Asp-192. The TSP type-1 domain occupies 277 to 331 (DCEVSLWSSWGLCGGHCGRLGTKSRTRYVRVQPANNGSPCPELEEEAECVPDNCV). A C-linked (Man) tryptophan glycan is attached at Trp-283.

As to quaternary structure, monomer. Interacts with integrin. In terms of tissue distribution, expressed in normal lung tissue but not in lung carcinoma cell lines.

It is found in the secreted. Its subcellular location is the extracellular space. The protein resides in the extracellular matrix. Cell adhesion protein that promotes adhesion and outgrowth of hippocampal embryonic neurons. Binds directly to bacteria and their components and functions as an opsonin for macrophage phagocytosis of bacteria. Essential in the initiation of the innate immune response and represents a unique pattern-recognition molecule in the ECM for microbial pathogens. Binds bacterial lipopolysaccharide (LPS). The sequence is that of Spondin-2 (SPON2) from Homo sapiens (Human).